Reading from the N-terminus, the 64-residue chain is Conotoxin Im11.4 (64 aa).

A signal peptide spans 1–26; it reads MMFRLTSVSCILLVIAFLNLVGLTNA. Intrachain disulfides connect cysteine 27/cysteine 41, cysteine 34/cysteine 46, cysteine 40/cysteine 50, and cysteine 45/cysteine 54. Histidine 57 is subject to Histidine amide. Positions 61–64 are excised as a propeptide; it reads ATFQ.

Belongs to the conotoxin I2 superfamily. As to expression, expressed by the venom duct.

Its subcellular location is the secreted. This Conus imperialis (Imperial cone) protein is Conotoxin Im11.4.